Reading from the N-terminus, the 176-residue chain is Inorganic pyrophosphatase (176 aa).

3 residues coordinate substrate: Lys30, Arg44, and Tyr56. Residues Asp66, Asp71, and Asp103 each coordinate Mg(2+). Position 142 (Tyr142) interacts with substrate.

This sequence belongs to the PPase family. As to quaternary structure, homohexamer. Requires Mg(2+) as cofactor.

The protein resides in the cytoplasm. The enzyme catalyses diphosphate + H2O = 2 phosphate + H(+). Catalyzes the hydrolysis of inorganic pyrophosphate (PPi) forming two phosphate ions. The polypeptide is Inorganic pyrophosphatase (Vibrio parahaemolyticus serotype O3:K6 (strain RIMD 2210633)).